A 265-amino-acid polypeptide reads, in one-letter code: Neuronal membrane glycoprotein M6-b (265 aa).

The chain crosses the membrane as a helical span at residues 31-51; the sequence is GGVPYASLVATILCFSGVALF. An N-linked (GlcNAc...) asparagine glycan is attached at asparagine 73. 2 helical membrane-spanning segments follow: residues 90 to 110 and 136 to 156; these read VIYGIASFFFLYGIILLAEGF and FVFLTYVLGVAWLGVFGFSAV. Asparagine 177 carries an N-linked (GlcNAc...) asparagine glycan. Residues 224–244 form a helical membrane-spanning segment; the sequence is LFIVACAGAGATVIALLIYMM. Residue serine 257 is modified to Phosphoserine.

It belongs to the myelin proteolipid protein family. In terms of assembly, interacts with SERT. In terms of tissue distribution, highly expressed in the ventral medullary surface, moderately in the cerebral cortex and cerebellum, poorly in lung and kidney, and not at all in heart, skeletal muscle, liver, stomach or stomach.

The protein resides in the membrane. It is found in the cell membrane. May be involved in neural development. Involved in regulation of osteoblast function and bone formation. Involved in matrix vesicle release by osteoblasts; this function seems to involve maintenance of the actin cytoskeleton. May be involved in cellular trafficking of SERT and thereby in regulation of serotonin uptake. The sequence is that of Neuronal membrane glycoprotein M6-b (Gpm6b) from Rattus norvegicus (Rat).